The following is a 191-amino-acid chain: Small ribosomal subunit protein uS4A (191 aa).

Phosphoserine is present on residues S50 and S161. Residues R107–E181 form the S4 RNA-binding domain. Residue Y164 is modified to Phosphotyrosine. Residues G166–E191 form a disordered region. At S179 the chain carries Phosphoserine.

This sequence belongs to the universal ribosomal protein uS4 family. As to quaternary structure, component of the small ribosomal subunit (SSU). Mature yeast ribosomes consist of a small (40S) and a large (60S) subunit. The 40S small subunit contains 1 molecule of ribosomal RNA (18S rRNA) and at least 33 different proteins. The large 60S subunit contains 3 rRNA molecules (25S, 5.8S and 5S rRNA) and at least 46 different proteins. Interacts with snoRNA U3. uS11 interacts with MPP10. Component of the ribosomal small subunit (SSU) processome composed of at least 40 protein subunits and snoRNA U3.

It is found in the cytoplasm. In terms of biological role, component of the ribosome, a large ribonucleoprotein complex responsible for the synthesis of proteins in the cell. The small ribosomal subunit (SSU) binds messenger RNAs (mRNAs) and translates the encoded message by selecting cognate aminoacyl-transfer RNA (tRNA) molecules. The large subunit (LSU) contains the ribosomal catalytic site termed the peptidyl transferase center (PTC), which catalyzes the formation of peptide bonds, thereby polymerizing the amino acids delivered by tRNAs into a polypeptide chain. The nascent polypeptides leave the ribosome through a tunnel in the LSU and interact with protein factors that function in enzymatic processing, targeting, and the membrane insertion of nascent chains at the exit of the ribosomal tunnel. uS4 is involved in nucleolar processing of pre-18S ribosomal RNA and ribosome assembly. This Schizosaccharomyces pombe (strain 972 / ATCC 24843) (Fission yeast) protein is Small ribosomal subunit protein uS4A (rps901).